A 40-amino-acid chain; its full sequence is Photosystem II reaction center protein J (40 aa).

Residues 8–28 (IPLWLIGTVVGTPVISLVGIF) form a helical membrane-spanning segment.

The protein belongs to the PsbJ family. PSII is composed of 1 copy each of membrane proteins PsbA, PsbB, PsbC, PsbD, PsbE, PsbF, PsbH, PsbI, PsbJ, PsbK, PsbL, PsbM, PsbT, PsbX, PsbY, PsbZ, Psb30/Ycf12, at least 3 peripheral proteins of the oxygen-evolving complex and a large number of cofactors. It forms dimeric complexes.

It is found in the plastid. It localises to the chloroplast thylakoid membrane. Its function is as follows. One of the components of the core complex of photosystem II (PSII). PSII is a light-driven water:plastoquinone oxidoreductase that uses light energy to abstract electrons from H(2)O, generating O(2) and a proton gradient subsequently used for ATP formation. It consists of a core antenna complex that captures photons, and an electron transfer chain that converts photonic excitation into a charge separation. This is Photosystem II reaction center protein J from Huperzia lucidula (Shining clubmoss).